The chain runs to 227 residues: Glial cell line-derived neurotrophic factor (227 aa).

Positions 1–19 (MKLWAILAVCILLLSSVSS) are cleaved as a signal peptide. A propeptide spanning residues 20 to 93 (IPLPSNWLAG…EFIQDTIKRL (74 aa)) is cleaved from the precursor. 2 disordered regions span residues 32 to 61 (RSHLPDPQEGEDQVFGMDGAVPEDPTANMA) and 93 to 113 (LKRSSNKQPPSRRDRGRQSLA). 3 disulfide bridges follow: C134-C195, C161-C224, and C165-C226. N-linked (GlcNAc...) asparagine glycans are attached at residues N142 and N178.

Belongs to the TGF-beta family. GDNF subfamily. As to quaternary structure, homodimer; disulfide-linked. Interacts with GFRA1 coreceptor and RET: forms a 2:2:2 ternary complex composed of GDNF ligand, GFRA1 and RET receptor. As to expression, from stage 22, expressed in somites and the pronephros. At stage 24 and 26, expressed in the pharyngeal arches I-III. At stage 31, expression in the eye, central nervous system and pharyngeal arches IV and V increases. Up to stage 34, expression becomes intense at the oral cavity and lateral line structures. At this stage, expression weakens in the pharyngeal arches, and increases in the epibranchial arches. Expressed in the digestive tract in stage 34 embryos.

The protein localises to the secreted. Neurotrophic factor that enhances survival and morphological differentiation of dopaminergic neurons and increases their high-affinity dopamine uptake. Acts by binding to its coreceptor, GFRA1, leading to autophosphorylation and activation of the RET receptor. This is Glial cell line-derived neurotrophic factor from Xenopus laevis (African clawed frog).